The chain runs to 363 residues: Pyruvate dehydrogenase E1 component subunit alpha, mitochondrial (363 aa).

The transit peptide at 1–2 directs the protein to the mitochondrion; sequence RN. N6-acetyllysine; alternate is present on Lys-36. Lys-36 carries the N6-succinyllysine; alternate modification. Positions 65, 91, 92, 130, 138, 140, 169, 170, 171, 198, and 200 each coordinate pyruvate. Thiamine diphosphate-binding residues include Tyr-91 and Arg-92. Thiamine diphosphate-binding residues include Gly-138, Val-140, Asp-169, Gly-170, Ala-171, and Asn-198. A Mg(2+)-binding site is contributed by Asp-169. Mg(2+)-binding residues include Asn-198 and Tyr-200. Position 205 is a phosphoserine; by PDK1 (Ser-205). Position 217 is an N6-acetyllysine; alternate (Lys-217). The residue at position 217 (Lys-217) is an N6-succinyllysine; alternate. Lys-240 bears the N6-acetyllysine mark. At Lys-250 the chain carries N6-succinyllysine. Residue His-265 coordinates thiamine diphosphate. Phosphoserine; by PDK1, PDK2, PDK3 and PDK4 is present on Ser-266. Ser-268 carries the post-translational modification Phosphoserine. At Ser-273 the chain carries Phosphoserine; by PDK1, PDK2, PDK3 and PDK4. The residue at position 274 (Tyr-274) is a Phosphotyrosine. An N6-acetyllysine; alternate modification is found at Lys-286. N6-succinyllysine; alternate is present on Lys-286. Lys-294 and Lys-309 each carry N6-acetyllysine. Lys-358 bears the N6-succinyllysine mark.

As to quaternary structure, heterotetramer of two PDHA1 and two PDHB subunits. The heterotetramer interacts with DLAT, and is part of the multimeric pyruvate dehydrogenase complex that contains multiple copies of pyruvate dehydrogenase (E1), dihydrolipoamide acetyltransferase (DLAT, E2) and lipoamide dehydrogenase (DLD, E3). These subunits are bound to an inner core composed of about 48 DLAT and 12 PDHX molecules. It depends on thiamine diphosphate as a cofactor. Mg(2+) is required as a cofactor. Post-translationally, phosphorylation at Ser-205, Ser-266 and Ser-273 by PDK family kinases inactivates the enzyme; for this phosphorylation at a single site is sufficient. Phosphorylation at Ser-266 interferes with access to active site, and thereby inactivates the enzyme. Dephosphorylation at all three sites, i.e. at Ser-205, Ser-266 and Ser-273, is required for reactivation. Acetylation alters the phosphorylation pattern. Deacetylated by SIRT3.

It is found in the mitochondrion matrix. The enzyme catalyses N(6)-[(R)-lipoyl]-L-lysyl-[protein] + pyruvate + H(+) = N(6)-[(R)-S(8)-acetyldihydrolipoyl]-L-lysyl-[protein] + CO2. Its activity is regulated as follows. Pyruvate dehydrogenase activity is inhibited by phosphorylation of PDHA1; it is reactivated by dephosphorylation. In terms of biological role, the pyruvate dehydrogenase complex catalyzes the overall conversion of pyruvate to acetyl-CoA and CO(2), and thereby links the glycolytic pathway to the tricarboxylic cycle. The sequence is that of Pyruvate dehydrogenase E1 component subunit alpha, mitochondrial (PDHA) from Sminthopsis macroura (Stripe-faced dunnart).